A 185-amino-acid polypeptide reads, in one-letter code: CD160 antigen (185 aa).

A signal peptide spans 1–27 (MQRILMAPGQSCCALAILLAIVNFQHG). The Ig-like V-type domain occupies 28-136 (GCIHVTSSAS…HGHFLSVLVT (109 aa)). Disulfide bonds link Cys47–Cys115 and Cys64–Cys71. Residues Asn138 and Asn156 are each glycosylated (N-linked (GlcNAc...) asparagine). Ser160 carries GPI-anchor amidated serine lipidation. A propeptide spans 161 to 185 (SGFLQVKAWGMLVTSLVALQALYTL) (removed in mature form).

Homomultimer; disulfide-linked. Interacts with classical and non-classical MHC class I molecules. Interacts with TNFRSF14 (via cysteine-rich domain 1); this interaction is direct. Interacts with LCK and CD247/CD3 zeta chain. In terms of tissue distribution, expressed in resting and activated NK cell subsets (at protein level). Expressed in resting NKT cells (at protein level). Expressed in activated CD8+ T cells (at protein level). Highly expressed in intraepithelial lymphocyte (IEL) subsets, particularly in innate-like CD8A-positive IELs (at protein level).

Its subcellular location is the cell membrane. The protein localises to the secreted. In terms of biological role, receptor on immune cells capable to deliver stimulatory or inhibitory signals that regulate cell activation and differentiation. Exists as a GPI-anchored and as a transmembrane form, each likely initiating distinct signaling pathways via phosphoinositol 3-kinase in activated NK cells and via LCK and CD247/CD3 zeta chain in activated T cells. Receptor for both classical and non-classical MHC class I molecules. Receptor or ligand for TNF superfamily member TNFRSF14, participating in bidirectional cell-cell contact signaling between antigen presenting cells and lymphocytes. Upon ligation of TNFRSF14, provides stimulatory signal to NK cells enhancing IFNG production and anti-tumor immune response. On activated CD4+ T cells, interacts with TNFRSF14 and down-regulates CD28 costimulatory signaling, restricting memory and alloantigen-specific immune response. In the context of bacterial infection, acts as a ligand for TNFRSF14 on epithelial cells, triggering the production of antimicrobial proteins and pro-inflammatory cytokines. Functionally, the soluble GPI-cleaved form, usually released by activated lymphocytes, might play an immune regulatory role by limiting lymphocyte effector functions. The protein is CD160 antigen of Mus musculus (Mouse).